Consider the following 358-residue polypeptide: 3-dehydroquinate synthase (358 aa).

Residues 75–80 (SGEGSK), 109–113 (GVLGD), 133–134 (TT), Lys146, and Lys155 each bind NAD(+). Positions 188, 245, and 262 each coordinate Zn(2+).

This sequence belongs to the sugar phosphate cyclases superfamily. Dehydroquinate synthase family. Co(2+) serves as cofactor. The cofactor is Zn(2+). Requires NAD(+) as cofactor.

It localises to the cytoplasm. It catalyses the reaction 7-phospho-2-dehydro-3-deoxy-D-arabino-heptonate = 3-dehydroquinate + phosphate. It functions in the pathway metabolic intermediate biosynthesis; chorismate biosynthesis; chorismate from D-erythrose 4-phosphate and phosphoenolpyruvate: step 2/7. Functionally, catalyzes the conversion of 3-deoxy-D-arabino-heptulosonate 7-phosphate (DAHP) to dehydroquinate (DHQ). This Methylacidiphilum infernorum (isolate V4) (Methylokorus infernorum (strain V4)) protein is 3-dehydroquinate synthase.